A 401-amino-acid polypeptide reads, in one-letter code: Bifunctional D-cysteine desulfhydrase/1-aminocyclopropane-1-carboxylate deaminase, mitochondrial (401 aa).

A mitochondrion-targeting transit peptide spans 1 to 37 (MRGRSLTLSRVKLELARRSMSATSVPSMADFLTKKPY). R2 bears the N-acetylserine mark. N6-(pyridoxal phosphate)lysine is present on K93. S120 acts as the Nucleophile in catalysis.

This sequence belongs to the ACC deaminase/D-cysteine desulfhydrase family. The cofactor is pyridoxal 5'-phosphate. In terms of tissue distribution, highly expressed in stems and cauline leaves, and at lower levels in roots, rosette leaves and flowers.

It is found in the mitochondrion. The catalysed reaction is D-cysteine + H2O = hydrogen sulfide + pyruvate + NH4(+) + H(+). It catalyses the reaction 1-aminocyclopropane-1-carboxylate + H2O = 2-oxobutanoate + NH4(+). Catalyzes the production of hydrogen sulfide (H2S) from cysteine. Is mainly responsible for the degradation of cysteine to generate H2S, a regulator of stomatal movement and closure. Has high affinity for D-cysteine. In terms of biological role, possesses 1-aminocyclopropane-1-carboxylic acid (ACC) deaminase activity. Acts as a regulator of ACC levels and causes changes in ethylene levels. In Arabidopsis thaliana (Mouse-ear cress), this protein is Bifunctional D-cysteine desulfhydrase/1-aminocyclopropane-1-carboxylate deaminase, mitochondrial (DCD).